Reading from the N-terminus, the 227-residue chain is CDP-diacylglycerol--inositol 3-phosphatidyltransferase 1 (227 aa).

The next 2 membrane-spanning stretches (helical) occupy residues 12–36 (LSVY…AFAV) and 42–61 (PLFS…DGWV). The Mg(2+) site is built by Asp55 and Asp58. A CDP-1,2-diacyl-sn-glycerol is bound by residues Gly59, Arg63, and Ser69. 4 helical membrane-spanning segments follow: residues 73 to 95 (AVLD…SQIY), 101 to 122 (FLSL…TFLA), 142 to 165 (YGNR…LLLI), and 177 to 200 (VVAT…GWSM). 2 residues coordinate Mg(2+): Asp76 and Asp80. The Proton acceptor role is filled by Asp80.

The protein belongs to the CDP-alcohol phosphatidyltransferase class-I family. Mg(2+) is required as a cofactor. Requires Mn(2+) as cofactor. In terms of tissue distribution, expressed in stems, flowers, shoots and roots. Present in epidermal tissues.

It is found in the membrane. It carries out the reaction a CDP-1,2-diacyl-sn-glycerol + myo-inositol = a 1,2-diacyl-sn-glycero-3-phospho-(1D-myo-inositol) + CMP + H(+). In terms of biological role, catalyzes the biosynthesis of phosphatidylinositol (PtdIns) as well as PtdIns:inositol exchange reaction. May thus act to reduce an excessive cellular PtdIns content. The exchange activity is due to the reverse reaction of PtdIns synthase and is dependent on CMP, which is tightly bound to the enzyme. The chain is CDP-diacylglycerol--inositol 3-phosphatidyltransferase 1 (PIS1) from Arabidopsis thaliana (Mouse-ear cress).